The primary structure comprises 332 residues: Beta-ketoacyl-[acyl-carrier-protein] synthase III 5 (332 aa).

Catalysis depends on residues Cys-111 and His-253. The ACP-binding stretch occupies residues 254–258 (QANAR). Residue Asn-283 is part of the active site.

This sequence belongs to the thiolase-like superfamily. FabH family. As to quaternary structure, homodimer.

It localises to the cytoplasm. It catalyses the reaction malonyl-[ACP] + acetyl-CoA + H(+) = 3-oxobutanoyl-[ACP] + CO2 + CoA. It participates in lipid metabolism; fatty acid biosynthesis. Functionally, catalyzes the condensation reaction of fatty acid synthesis by the addition to an acyl acceptor of two carbons from malonyl-ACP. Catalyzes the first condensation reaction which initiates fatty acid synthesis and may therefore play a role in governing the total rate of fatty acid production. Possesses both acetoacetyl-ACP synthase and acetyl transacylase activities. Its substrate specificity determines the biosynthesis of branched-chain and/or straight-chain of fatty acids. The chain is Beta-ketoacyl-[acyl-carrier-protein] synthase III 5 from Streptomyces coelicolor (strain ATCC BAA-471 / A3(2) / M145).